A 169-amino-acid chain; its full sequence is Protein Flattop homolog (169 aa).

The disordered stretch occupies residues 53 to 169 (IPRSSRSPWG…SPKLATPEPC (117 aa)). The segment covering 119 to 130 (VQASPRNASPLQ) has biased composition (polar residues).

Belongs to the Flattop family.

It localises to the cytoplasm. The protein localises to the cytoskeleton. It is found in the cilium basal body. Its subcellular location is the cell projection. The protein resides in the cilium. It localises to the apical cell membrane. Its function is as follows. Acts as a regulator of cilium basal body docking and positioning in mono- and multiciliated cells. This is Protein Flattop homolog from Nematostella vectensis (Starlet sea anemone).